The primary structure comprises 585 residues: Proline--tRNA ligase (585 aa).

This sequence belongs to the class-II aminoacyl-tRNA synthetase family. ProS type 1 subfamily. Homodimer.

Its subcellular location is the cytoplasm. It catalyses the reaction tRNA(Pro) + L-proline + ATP = L-prolyl-tRNA(Pro) + AMP + diphosphate. Catalyzes the attachment of proline to tRNA(Pro) in a two-step reaction: proline is first activated by ATP to form Pro-AMP and then transferred to the acceptor end of tRNA(Pro). As ProRS can inadvertently accommodate and process non-cognate amino acids such as alanine and cysteine, to avoid such errors it has two additional distinct editing activities against alanine. One activity is designated as 'pretransfer' editing and involves the tRNA(Pro)-independent hydrolysis of activated Ala-AMP. The other activity is designated 'posttransfer' editing and involves deacylation of mischarged Ala-tRNA(Pro). The misacylated Cys-tRNA(Pro) is not edited by ProRS. This Cutibacterium acnes (strain DSM 16379 / KPA171202) (Propionibacterium acnes) protein is Proline--tRNA ligase.